The following is a 607-amino-acid chain: Major facilitator superfamily multidrug transporter mdrA (607 aa).

12 helical membrane-spanning segments follow: residues 77-97, 110-130, 139-159, 170-190, 202-222, 229-249, 305-325, 342-362, 385-405, 413-433, 443-463, and 478-498; these read MTVA…TGGV, VATL…LLWA, QIIF…SAGA, FFAG…IADM, LFAA…GFLG, WVMG…TIFV, PIVF…YMLF, VSSL…TYSV, LPPT…FAWT, IVCI…FLGI, IFAA…GAVF, and WASS…FLFY. Residues 523 to 583 are disordered; it reads EQMKQAPEPE…ASTRTASSLR (61 aa). Acidic residues predominate over residues 553–564; it reads DVSETESNVEEL. A compositionally biased stretch (low complexity) spans 572 to 583; sequence SRASTRTASSLR.

The protein belongs to the major facilitator superfamily. DHA1 family. Polyamines/proton antiporter (TC 2.A.1.2.16) subfamily.

The protein localises to the cell membrane. In terms of biological role, MFS transporter involved in the basal level of azole susceptibility. Confers resistance to voriconazole and, to a lesser extent, to fluconazole. The protein is Major facilitator superfamily multidrug transporter mdrA of Aspergillus fumigatus (strain ATCC MYA-4609 / CBS 101355 / FGSC A1100 / Af293) (Neosartorya fumigata).